Reading from the N-terminus, the 1389-residue chain is DNA-directed RNA polymerase subunit beta' (1389 aa).

Residues cysteine 73, cysteine 75, cysteine 88, and cysteine 91 each contribute to the Zn(2+) site. Aspartate 464, aspartate 466, and aspartate 468 together coordinate Mg(2+). Positions 810, 884, 891, and 894 each coordinate Zn(2+).

It belongs to the RNA polymerase beta' chain family. The RNAP catalytic core consists of 2 alpha, 1 beta, 1 beta' and 1 omega subunit. When a sigma factor is associated with the core the holoenzyme is formed, which can initiate transcription. Mg(2+) serves as cofactor. It depends on Zn(2+) as a cofactor.

It catalyses the reaction RNA(n) + a ribonucleoside 5'-triphosphate = RNA(n+1) + diphosphate. Functionally, DNA-dependent RNA polymerase catalyzes the transcription of DNA into RNA using the four ribonucleoside triphosphates as substrates. This Pelagibacter ubique (strain HTCC1062) protein is DNA-directed RNA polymerase subunit beta'.